A 498-amino-acid polypeptide reads, in one-letter code: Probable malate:quinone oxidoreductase 2 (498 aa).

It belongs to the MQO family. The cofactor is FAD.

It catalyses the reaction (S)-malate + a quinone = a quinol + oxaloacetate. Its pathway is carbohydrate metabolism; tricarboxylic acid cycle; oxaloacetate from (S)-malate (quinone route): step 1/1. This is Probable malate:quinone oxidoreductase 2 from Staphylococcus epidermidis (strain ATCC 35984 / DSM 28319 / BCRC 17069 / CCUG 31568 / BM 3577 / RP62A).